The primary structure comprises 226 residues: Enolase-phosphatase E1 (226 aa).

This sequence belongs to the HAD-like hydrolase superfamily. MasA/MtnC family. In terms of assembly, monomer. It depends on Mg(2+) as a cofactor.

The catalysed reaction is 5-methylsulfanyl-2,3-dioxopentyl phosphate + H2O = 1,2-dihydroxy-5-(methylsulfanyl)pent-1-en-3-one + phosphate. Its pathway is amino-acid biosynthesis; L-methionine biosynthesis via salvage pathway; L-methionine from S-methyl-5-thio-alpha-D-ribose 1-phosphate: step 3/6. It participates in amino-acid biosynthesis; L-methionine biosynthesis via salvage pathway; L-methionine from S-methyl-5-thio-alpha-D-ribose 1-phosphate: step 4/6. Its function is as follows. Bifunctional enzyme that catalyzes the enolization of 2,3-diketo-5-methylthiopentyl-1-phosphate (DK-MTP-1-P) into the intermediate 2-hydroxy-3-keto-5-methylthiopentenyl-1-phosphate (HK-MTPenyl-1-P), which is then dephosphorylated to form the acireductone 1,2-dihydroxy-3-keto-5-methylthiopentene (DHK-MTPene). In Shewanella baltica (strain OS223), this protein is Enolase-phosphatase E1.